The chain runs to 209 residues: Probable endopeptidase Cgl2188 (209 aa).

The signal sequence occupies residues 1 to 35; it reads MGKHRRNNSNATRKAVAASAVALGATAAIASPAQA. A NlpC/P60 domain is found at 95–209; it reads ASTGQAIVDA…YMPFHSAVRF (115 aa). The active-site Nucleophile is the Cys-125. His-173 acts as the Proton acceptor in catalysis. His-185 is a catalytic residue.

This sequence belongs to the peptidase C40 family.

The protein resides in the secreted. This Corynebacterium glutamicum (strain ATCC 13032 / DSM 20300 / JCM 1318 / BCRC 11384 / CCUG 27702 / LMG 3730 / NBRC 12168 / NCIMB 10025 / NRRL B-2784 / 534) protein is Probable endopeptidase Cgl2188.